The primary structure comprises 540 residues: V-set and immunoglobulin domain-containing protein 10 (540 aa).

The signal sequence occupies residues 1–30 (MAAGGSAPEPRVLVCLGALLAGWVAVGLEA). 4 consecutive Ig-like C2-type domains span residues 31–119 (VVIG…WLQV), 123–215 (PYQI…RKVT), 223–309 (PPPS…VQIR), and 311–404 (PSLL…IWLS). The Extracellular segment spans residues 31-413 (VVIGEVHENV…SVKEPLNIGG (383 aa)). Residues asparagine 39, asparagine 46, asparagine 70, asparagine 108, asparagine 138, asparagine 171, asparagine 180, and asparagine 198 are each glycosylated (N-linked (GlcNAc...) asparagine). Cysteine 44 and cysteine 103 are oxidised to a cystine. 2 cysteine pairs are disulfide-bonded: cysteine 153–cysteine 201 and cysteine 245–cysteine 290. An N-linked (GlcNAc...) asparagine glycan is attached at asparagine 326. A disulfide bridge links cysteine 331 with cysteine 388. The chain crosses the membrane as a helical span at residues 414–434 (IVGTIVSLLLLGLAIISGLLL). Residues 435 to 540 (HYSPVFCWKV…DIVQEEDRPV (106 aa)) lie on the Cytoplasmic side of the membrane. Over residues 461–477 (DSEEEEEEEEEEEEDAA) the composition is skewed to acidic residues. 2 disordered regions span residues 461 to 500 (DSEE…QDHI) and 513 to 540 (QMGN…DRPV). The segment covering 482 to 500 (EGAREREELPKEIPKQDHI) has biased composition (basic and acidic residues). Residues 521-534 (LQDDSSEEQSDIVQ) are compositionally biased toward acidic residues.

It is found in the membrane. The chain is V-set and immunoglobulin domain-containing protein 10 (VSIG10) from Homo sapiens (Human).